The chain runs to 336 residues: tRNA N6-adenosine threonylcarbamoyltransferase (336 aa).

Fe cation is bound by residues His114 and His118. Residues 136 to 140 (LVSGG), Asp169, Gly182, Asp186, and Asn275 contribute to the substrate site. Position 301 (Asp301) interacts with Fe cation.

Belongs to the KAE1 / TsaD family. The cofactor is Fe(2+).

Its subcellular location is the cytoplasm. It carries out the reaction L-threonylcarbamoyladenylate + adenosine(37) in tRNA = N(6)-L-threonylcarbamoyladenosine(37) in tRNA + AMP + H(+). In terms of biological role, required for the formation of a threonylcarbamoyl group on adenosine at position 37 (t(6)A37) in tRNAs that read codons beginning with adenine. Is involved in the transfer of the threonylcarbamoyl moiety of threonylcarbamoyl-AMP (TC-AMP) to the N6 group of A37, together with TsaE and TsaB. TsaD likely plays a direct catalytic role in this reaction. The sequence is that of tRNA N6-adenosine threonylcarbamoyltransferase from Streptococcus pneumoniae (strain Taiwan19F-14).